Here is a 558-residue protein sequence, read N- to C-terminus: Dihydroxy-acid dehydratase (558 aa).

Asp-78 lines the Mg(2+) pocket. Cys-119 is a [2Fe-2S] cluster binding site. Residues Asp-120 and Lys-121 each contribute to the Mg(2+) site. Lys-121 carries the post-translational modification N6-carboxylysine. Residue Cys-192 participates in [2Fe-2S] cluster binding. Mg(2+) is bound at residue Glu-446. Ser-472 (proton acceptor) is an active-site residue.

Belongs to the IlvD/Edd family. In terms of assembly, homodimer. The cofactor is [2Fe-2S] cluster. It depends on Mg(2+) as a cofactor.

The enzyme catalyses (2R)-2,3-dihydroxy-3-methylbutanoate = 3-methyl-2-oxobutanoate + H2O. The catalysed reaction is (2R,3R)-2,3-dihydroxy-3-methylpentanoate = (S)-3-methyl-2-oxopentanoate + H2O. It functions in the pathway amino-acid biosynthesis; L-isoleucine biosynthesis; L-isoleucine from 2-oxobutanoate: step 3/4. Its pathway is amino-acid biosynthesis; L-valine biosynthesis; L-valine from pyruvate: step 3/4. Functions in the biosynthesis of branched-chain amino acids. Catalyzes the dehydration of (2R,3R)-2,3-dihydroxy-3-methylpentanoate (2,3-dihydroxy-3-methylvalerate) into 2-oxo-3-methylpentanoate (2-oxo-3-methylvalerate) and of (2R)-2,3-dihydroxy-3-methylbutanoate (2,3-dihydroxyisovalerate) into 2-oxo-3-methylbutanoate (2-oxoisovalerate), the penultimate precursor to L-isoleucine and L-valine, respectively. This is Dihydroxy-acid dehydratase from Campylobacter jejuni subsp. jejuni serotype O:23/36 (strain 81-176).